Reading from the N-terminus, the 425-residue chain is Kynurenine/alpha-aminoadipate aminotransferase, mitochondrial (425 aa).

The N-terminal 29 residues, 1–29, are a transit peptide targeting the mitochondrion; that stretch reads MNYSRFLTATSLARKTSPIRATVEIMSRA. Residue R20 participates in substrate binding. A Phosphoserine modification is found at S40. Positions 74 and 142 each coordinate substrate. K172 is modified (N6-succinyllysine). K179 carries the N6-acetyllysine modification. The span at 179-188 shows a compositional bias: basic and acidic residues; that stretch reads KPEDSKDPTK. The disordered stretch occupies residues 179–208; it reads KPEDSKDPTKRTPKFLYTIPNGNNPTGNSL. A compositionally biased stretch (polar residues) spans 198–208; that stretch reads PNGNNPTGNSL. N202 provides a ligand contact to substrate. At K263 the chain carries N6-(pyridoxal phosphate)lysine; alternate. An N6-acetyllysine; alternate mark is found at K263 and K339. 2 positions are modified to N6-succinyllysine; alternate: K263 and K339. K351 carries the N6-acetyllysine modification. K367 carries the N6-acetyllysine; alternate modification. K367 carries the post-translational modification N6-succinyllysine; alternate. R399 is a binding site for substrate. K422 carries the post-translational modification N6-acetyllysine.

Belongs to the class-I pyridoxal-phosphate-dependent aminotransferase family. Homodimer. Pyridoxal 5'-phosphate is required as a cofactor. The N-terminus is blocked.

The protein localises to the mitochondrion. The enzyme catalyses L-kynurenine + 2-oxoglutarate = kynurenate + L-glutamate + H2O. It carries out the reaction L-2-aminoadipate + 2-oxoglutarate = 2-oxoadipate + L-glutamate. The catalysed reaction is glycine + 2-oxoglutarate = glyoxylate + L-glutamate. It catalyses the reaction L-kynurenine + glyoxylate = kynurenate + glycine + H2O. The enzyme catalyses 3-hydroxy-L-kynurenine + glyoxylate = xanthurenate + glycine + H2O. It carries out the reaction 2-oxohexanoate + L-kynurenine = L-2-aminohexanoate + kynurenate + H2O. The catalysed reaction is 3-phenylpyruvate + L-kynurenine = kynurenate + L-phenylalanine + H2O. It catalyses the reaction 4-methylsulfanyl-2-oxobutanoate + L-kynurenine = kynurenate + L-methionine + H2O. The enzyme catalyses 2-oxo-3-sulfanylpropanoate + L-kynurenine = kynurenate + L-cysteine + H2O. It carries out the reaction indole-3-pyruvate + L-kynurenine = kynurenate + L-tryptophan + H2O. The catalysed reaction is 2-oxopentanoate + L-kynurenine = L-2-aminopentanoate + kynurenate + H2O. It catalyses the reaction 4-methyl-2-oxopentanoate + L-kynurenine = kynurenate + L-leucine + H2O. The enzyme catalyses glyoxylate + L-methionine = 4-methylsulfanyl-2-oxobutanoate + glycine. It carries out the reaction L-2-aminoadipate + glyoxylate = 2-oxoadipate + glycine. The catalysed reaction is L-tyrosine + glyoxylate = 3-(4-hydroxyphenyl)pyruvate + glycine. It catalyses the reaction glyoxylate + L-phenylalanine = 3-phenylpyruvate + glycine. The enzyme catalyses L-tryptophan + glyoxylate = indole-3-pyruvate + glycine. It carries out the reaction L-leucine + glyoxylate = 4-methyl-2-oxopentanoate + glycine. The catalysed reaction is 2-oxobutanoate + L-kynurenine = (2S)-2-aminobutanoate + kynurenate + H2O. It catalyses the reaction 2-oxoadipate + L-kynurenine = L-2-aminoadipate + kynurenate + H2O. The enzyme catalyses 2-oxoadipate + L-kynurenine = 4-(2-aminophenyl)-2,4-dioxobutanoate + L-2-aminoadipate. Its pathway is amino-acid degradation; L-lysine degradation via saccharopine pathway; glutaryl-CoA from L-lysine: step 4/6. Its function is as follows. Transaminase with broad substrate specificity. Has transaminase activity towards aminoadipate, kynurenine, methionine and glutamate. Shows activity also towards tryptophan, aspartate and hydroxykynurenine. Accepts a variety of oxo-acids as amino-group acceptors, with a preference for 2-oxoglutarate, 2-oxocaproic acid, phenylpyruvate and alpha-oxo-gamma-methiol butyric acid. Can also use glyoxylate as amino-group acceptor (in vitro). The polypeptide is Kynurenine/alpha-aminoadipate aminotransferase, mitochondrial (Rattus norvegicus (Rat)).